The chain runs to 352 residues: Glycerol-3-phosphate dehydrogenase [NAD(P)+] (352 aa).

Residues W11, R37, and K112 each contribute to the NADPH site. Positions 112, 153, and 155 each coordinate sn-glycerol 3-phosphate. A157 is an NADPH binding site. K208, D261, S271, R272, and N273 together coordinate sn-glycerol 3-phosphate. Residue K208 is the Proton acceptor of the active site. R272 lines the NADPH pocket. The NADPH site is built by V296 and E298.

This sequence belongs to the NAD-dependent glycerol-3-phosphate dehydrogenase family.

The protein localises to the cytoplasm. The enzyme catalyses sn-glycerol 3-phosphate + NAD(+) = dihydroxyacetone phosphate + NADH + H(+). It carries out the reaction sn-glycerol 3-phosphate + NADP(+) = dihydroxyacetone phosphate + NADPH + H(+). Its pathway is membrane lipid metabolism; glycerophospholipid metabolism. Catalyzes the reduction of the glycolytic intermediate dihydroxyacetone phosphate (DHAP) to sn-glycerol 3-phosphate (G3P), the key precursor for phospholipid synthesis. The polypeptide is Glycerol-3-phosphate dehydrogenase [NAD(P)+] (Polaromonas naphthalenivorans (strain CJ2)).